The primary structure comprises 131 residues: Ribosome-binding factor A (131 aa).

The protein belongs to the RbfA family. Monomer. Binds 30S ribosomal subunits, but not 50S ribosomal subunits or 70S ribosomes.

The protein localises to the cytoplasm. In terms of biological role, one of several proteins that assist in the late maturation steps of the functional core of the 30S ribosomal subunit. Associates with free 30S ribosomal subunits (but not with 30S subunits that are part of 70S ribosomes or polysomes). Required for efficient processing of 16S rRNA. May interact with the 5'-terminal helix region of 16S rRNA. This is Ribosome-binding factor A from Gloeothece citriformis (strain PCC 7424) (Cyanothece sp. (strain PCC 7424)).